The sequence spans 330 residues: Putative aminopeptidase (330 aa).

Residues histidine 65 and aspartate 168 each contribute to the a divalent metal cation site. Glutamate 198 functions as the Proton acceptor in the catalytic mechanism. Residues glutamate 199, aspartate 221, and histidine 307 each contribute to the a divalent metal cation site.

Belongs to the peptidase M42 family. A divalent metal cation is required as a cofactor.

The chain is Putative aminopeptidase (celM) from Acetivibrio thermocellus (Hungateiclostridium thermocellum).